A 427-amino-acid polypeptide reads, in one-letter code: Gamma-glutamyl phosphate reductase (427 aa).

Belongs to the gamma-glutamyl phosphate reductase family.

It is found in the cytoplasm. It catalyses the reaction L-glutamate 5-semialdehyde + phosphate + NADP(+) = L-glutamyl 5-phosphate + NADPH + H(+). It functions in the pathway amino-acid biosynthesis; L-proline biosynthesis; L-glutamate 5-semialdehyde from L-glutamate: step 2/2. Catalyzes the NADPH-dependent reduction of L-glutamate 5-phosphate into L-glutamate 5-semialdehyde and phosphate. The product spontaneously undergoes cyclization to form 1-pyrroline-5-carboxylate. This chain is Gamma-glutamyl phosphate reductase, found in Brucella canis (strain ATCC 23365 / NCTC 10854 / RM-666).